We begin with the raw amino-acid sequence, 198 residues long: Septum-promoting GTP-binding protein 1 (198 aa).

The interval 6 to 198 (KNNVTIKVGM…GDPILEYIDR (193 aa)) is small GTPase-like. Residues 17-24 (GDSSIGKT), 65-69 (DLGGQ), and 122-125 (TKYD) each bind GTP.

As to quaternary structure, interacts with cdc7 and cdc11.

In terms of biological role, GTP-binding protein essential for the induction of septum formation at G2 and pre-START stages of mitosis. Acts via the cdc7 protein kinase pathway. The chain is Septum-promoting GTP-binding protein 1 (spg1) from Schizosaccharomyces pombe (strain 972 / ATCC 24843) (Fission yeast).